The chain runs to 351 residues: L-threonine 3-dehydrogenase (351 aa).

Cysteine 42 is a Zn(2+) binding site. Catalysis depends on charge relay system residues threonine 44 and histidine 47. Positions 67, 68, 97, 100, 103, and 111 each coordinate Zn(2+). Residues isoleucine 179, aspartate 199, arginine 204, leucine 266 to leucine 268, and isoleucine 291 to threonine 292 each bind NAD(+).

The protein belongs to the zinc-containing alcohol dehydrogenase family. Homotetramer. Zn(2+) is required as a cofactor.

Its subcellular location is the cytoplasm. The catalysed reaction is L-threonine + NAD(+) = (2S)-2-amino-3-oxobutanoate + NADH + H(+). The protein operates within amino-acid degradation; L-threonine degradation via oxydo-reductase pathway; glycine from L-threonine: step 1/2. Functionally, catalyzes the NAD(+)-dependent oxidation of L-threonine to 2-amino-3-ketobutyrate. This chain is L-threonine 3-dehydrogenase, found in Symbiobacterium thermophilum (strain DSM 24528 / JCM 14929 / IAM 14863 / T).